Here is a 216-residue protein sequence, read N- to C-terminus: Triosephosphate isomerase (216 aa).

7–9 (NLK) serves as a coordination point for substrate. Histidine 89 functions as the Electrophile in the catalytic mechanism. Glutamate 137 (proton acceptor) is an active-site residue. Substrate contacts are provided by residues isoleucine 142, glycine 175, and 196 to 197 (AS).

This sequence belongs to the triosephosphate isomerase family. Homotetramer; dimer of dimers.

Its subcellular location is the cytoplasm. The enzyme catalyses D-glyceraldehyde 3-phosphate = dihydroxyacetone phosphate. Its pathway is carbohydrate biosynthesis; gluconeogenesis. The protein operates within carbohydrate degradation; glycolysis; D-glyceraldehyde 3-phosphate from glycerone phosphate: step 1/1. In terms of biological role, involved in the gluconeogenesis. Catalyzes stereospecifically the conversion of dihydroxyacetone phosphate (DHAP) to D-glyceraldehyde-3-phosphate (G3P). This Thermoplasma acidophilum (strain ATCC 25905 / DSM 1728 / JCM 9062 / NBRC 15155 / AMRC-C165) protein is Triosephosphate isomerase.